The chain runs to 551 residues: Cysteine desulfurase SufS (551 aa).

The first 22 residues, 1–22, serve as a signal peptide directing secretion; that stretch reads MRPSSAAWICLLLRIANYTCYS. The residue at position 327 (lysine 327) is an N6-(pyridoxal phosphate)lysine. Catalysis depends on cysteine 500, which acts as the Cysteine persulfide intermediate.

Belongs to the class-V pyridoxal-phosphate-dependent aminotransferase family. Csd subfamily. As to quaternary structure, monomer. Interacts with SufE; interaction enhances cysteine desulfurase activity of SufS. Pyridoxal 5'-phosphate is required as a cofactor.

The protein resides in the plastid. It is found in the apicoplast. The enzyme catalyses (sulfur carrier)-H + L-cysteine = (sulfur carrier)-SH + L-alanine. Its pathway is cofactor biosynthesis; iron-sulfur cluster biosynthesis. In terms of biological role, catalyzes sulfur activation and mobilization in sulfur mobilization (SUF) pathway for iron-sulfur (Fe-S) cluster biogenesis. Active when in complex with a partner protein SufE. Required for apicoplast maintenance. Plays a role in the development of sporozoites in oocysts in mosquitoes. In Plasmodium vivax, this protein is Cysteine desulfurase SufS.